A 25-amino-acid polypeptide reads, in one-letter code: Small ribosomal subunit protein eS32 (25 aa).

The interval 1–25 (MRDKWRKKRVRRLKRKRRKVRARSK) is disordered.

It belongs to the eukaryotic ribosomal protein eS32 family. Component of the small ribosomal subunit. Mature ribosomes consist of a small (40S) and a large (60S) subunit. The 40S subunit contains about 32 different proteins and 1 molecule of RNA (18S). The 60S subunit contains 45 different proteins and 3 molecules of RNA (25S, 5.8S and 5S).

Its subcellular location is the cytoplasm. Component of the ribosome, a large ribonucleoprotein complex responsible for the synthesis of proteins in the cell. The small ribosomal subunit (SSU) binds messenger RNAs (mRNAs) and translates the encoded message by selecting cognate aminoacyl-transfer RNA (tRNA) molecules. The large subunit (LSU) contains the ribosomal catalytic site termed the peptidyl transferase center (PTC), which catalyzes the formation of peptide bonds, thereby polymerizing the amino acids delivered by tRNAs into a polypeptide chain. The nascent polypeptides leave the ribosome through a tunnel in the LSU and interact with protein factors that function in enzymatic processing, targeting, and the membrane insertion of nascent chains at the exit of the ribosomal tunnel. This is Small ribosomal subunit protein eS32 from Candida albicans (strain SC5314 / ATCC MYA-2876) (Yeast).